Here is a 491-residue protein sequence, read N- to C-terminus: Trypanothione reductase (491 aa).

35–52 (DVQATHGPPALVALGGTC) provides a ligand contact to FAD. Cys-52 and Cys-57 are disulfide-bonded. Residue His-461 is the Proton acceptor of the active site.

It belongs to the class-I pyridine nucleotide-disulfide oxidoreductase family. As to quaternary structure, homodimer. The cofactor is FAD.

The protein localises to the cytoplasm. It carries out the reaction trypanothione + NADP(+) = trypanothione disulfide + NADPH + H(+). In terms of biological role, trypanothione is the parasite analog of glutathione; this enzyme is the equivalent of glutathione reductase. In Leishmania donovani, this protein is Trypanothione reductase (TPR).